The chain runs to 566 residues: Membrane protein insertase YidC (566 aa).

Residues 7 to 27 traverse the membrane as a helical segment; it reads ILIVALAIVSYVMVLKWNQDY. Residues 38–72 are disordered; it reads ASSTTAPGLPDAPTGTSAANDDIPRAASDTTAPAE. The next 5 helical transmembrane spans lie at 347–367, 373–393, 443–463, 474–494, and 521–541; these read LELTVDYGFLWFIAQPIFWLL, LVGNWGWSIIFLTMLIKGIFF, LGGCLPILVQMPVFLSLYWVL, FMLWITDLSIKDPFFILPIIM, and PIIFTFFFLWFPAGLVLYWVV.

This sequence belongs to the OXA1/ALB3/YidC family. Type 1 subfamily. Interacts with the Sec translocase complex via SecD. Specifically interacts with transmembrane segments of nascent integral membrane proteins during membrane integration.

The protein localises to the cell inner membrane. Required for the insertion and/or proper folding and/or complex formation of integral membrane proteins into the membrane. Involved in integration of membrane proteins that insert both dependently and independently of the Sec translocase complex, as well as at least some lipoproteins. Aids folding of multispanning membrane proteins. The chain is Membrane protein insertase YidC from Pseudomonas fluorescens (strain ATCC BAA-477 / NRRL B-23932 / Pf-5).